Consider the following 178-residue polypeptide: Crossover junction endodeoxyribonuclease RuvC (178 aa).

Catalysis depends on residues Asp14, Glu73, and Asp145. Residues Asp14, Glu73, and Asp145 each coordinate Mg(2+).

The protein belongs to the RuvC family. In terms of assembly, homodimer which binds Holliday junction (HJ) DNA. The HJ becomes 2-fold symmetrical on binding to RuvC with unstacked arms; it has a different conformation from HJ DNA in complex with RuvA. In the full resolvosome a probable DNA-RuvA(4)-RuvB(12)-RuvC(2) complex forms which resolves the HJ. Requires Mg(2+) as cofactor.

The protein localises to the cytoplasm. The enzyme catalyses Endonucleolytic cleavage at a junction such as a reciprocal single-stranded crossover between two homologous DNA duplexes (Holliday junction).. In terms of biological role, the RuvA-RuvB-RuvC complex processes Holliday junction (HJ) DNA during genetic recombination and DNA repair. Endonuclease that resolves HJ intermediates. Cleaves cruciform DNA by making single-stranded nicks across the HJ at symmetrical positions within the homologous arms, yielding a 5'-phosphate and a 3'-hydroxyl group; requires a central core of homology in the junction. The consensus cleavage sequence is 5'-(A/T)TT(C/G)-3'. Cleavage occurs on the 3'-side of the TT dinucleotide at the point of strand exchange. HJ branch migration catalyzed by RuvA-RuvB allows RuvC to scan DNA until it finds its consensus sequence, where it cleaves and resolves the cruciform DNA. This is Crossover junction endodeoxyribonuclease RuvC from Nitrosomonas eutropha (strain DSM 101675 / C91 / Nm57).